We begin with the raw amino-acid sequence, 286 residues long: Release factor glutamine methyltransferase (286 aa).

Residues D136 and N179 each coordinate S-adenosyl-L-methionine. 179 to 182 is a substrate binding site; sequence NPPY.

The protein belongs to the protein N5-glutamine methyltransferase family. PrmC subfamily.

It carries out the reaction L-glutaminyl-[peptide chain release factor] + S-adenosyl-L-methionine = N(5)-methyl-L-glutaminyl-[peptide chain release factor] + S-adenosyl-L-homocysteine + H(+). In terms of biological role, methylates the class 1 translation termination release factors RF1/PrfA and RF2/PrfB on the glutamine residue of the universally conserved GGQ motif. In Borreliella burgdorferi (strain ATCC 35210 / DSM 4680 / CIP 102532 / B31) (Borrelia burgdorferi), this protein is Release factor glutamine methyltransferase.